The chain runs to 1258 residues: Non-secreted LysM effector LysM19 (1258 aa).

Residues Val148–Ser168 are disordered. A compositionally biased stretch (basic and acidic residues) spans Ser157–Ser168. 2 LysM domains span residues Ile1028–Leu1073 and Arg1179–Thr1227.

The protein belongs to the secreted LysM effector family.

Non-secreted LysM effector that might be involved in manipulation of host defenses for successful infection. The chain is Non-secreted LysM effector LysM19 from Penicillium expansum (Blue mold rot fungus).